Here is a 456-residue protein sequence, read N- to C-terminus: Putative sodium-coupled neutral amino acid transporter 11 (456 aa).

The disordered stretch occupies residues 1-25 (MRAGPRRQHLLPPQDNRAAVGYQRQ). A helical transmembrane segment spans residues 58-78 (FNVVNSIIGSGIIDFSLILLI). N94 carries N-linked (GlcNAc...) asparagine glycosylation. 6 consecutive transmembrane segments (helical) span residues 98–118 (GFPGYILLSVLQFLYPFIAMI), 143–163 (VFIGRHFIIGLSTVTFTLPLS), 171–191 (LGKVSLISTGLTTLILGIVMA), 206–226 (AWVFAKPNAIQAVGVMSFAFI), 252–272 (MSIVISVFICIFFATCGYLTF), and 291–313 (VTFGRFCYGVTVILTYPMECFVT). N325 carries N-linked (GlcNAc...) asparagine glycosylation. A run of 3 helical transmembrane segments spans residues 329–349 (VFHIVVTVMVITVATLVSLLI), 351–371 (CLGIVLELNGVLCATPLIFII), and 390–410 (IMSYVMLPIGAAVMVFGFVMA).

It belongs to the amino acid/polyamine transporter 2 family.

The protein resides in the membrane. Its function is as follows. Putative sodium-dependent amino acid/proton antiporter. This chain is Putative sodium-coupled neutral amino acid transporter 11 (SLC38A11), found in Macaca fascicularis (Crab-eating macaque).